A 513-amino-acid polypeptide reads, in one-letter code: Autophagy-related protein 18 (513 aa).

A WD 1 repeat occupies 2 to 40; the sequence is SDLPIINFINFNQNGTCISIGTSQGFKIFNCEPFGRFYQ. Residues 167–225 form a disordered region; sequence NNINIKKSDAAEDPLRKDHFAYDPSDHSHPQSTTESTSNNHNRTYSSGNNNNTNSNPNK. Basic and acidic residues predominate over residues 172-195; sequence KKSDAAEDPLRKDHFAYDPSDHSH. Over residues 205-225 the composition is skewed to low complexity; the sequence is NNHNRTYSSGNNNNTNSNPNK. Residues 248–288 form a WD 2 repeat; that stretch reads AHKGEIAALKLSADGTLLATASEKGTIIRVFNVENGSKVYQ. The tract at residues 289-292 is necessary for proper localization to vacuole membrane; sequence FRRG. Residues 289–293 carry the L/FRRG motif motif; the sequence is FRRGT. One copy of the WD 3 repeat lies at 293 to 332; it reads TYSTKISSLSFSKDNQFLAVCSSSKTVHIFKLGEKIIDNT. The interval 333 to 398 is disordered; it reads KPNELNSDDD…TVGRMIRKSS (66 aa). Over residues 338 to 369 the composition is skewed to acidic residues; sequence NSDDDMDDDLLPQFENGDDEEEVDEETLDEEA.

The protein belongs to the WD repeat PROPPIN family. Component of the PI(3,5)P2 regulatory complex. Interacts with ATG2 and ATG9. The ATG2-ATG18 complex is essential for autophagosome formation.

The protein resides in the preautophagosomal structure membrane. It is found in the vacuole membrane. It localises to the endosome membrane. Component of the PI(3,5)P2 regulatory complex that regulates both the synthesis and turnover of phosphatidylinositol 3,5-bisphosphate (PtdIns(3,5)P2). Plays an important role in osmotically-induced vacuole fragmentation. Required for cytoplasm to vacuole transport (Cvt) vesicle formation, pexophagy and starvation-induced autophagy. Involved in correct ATG9 trafficking to the pre-autophagosomal structure. With ATG2, protects ATG8 from ATG4-mediated cleavage. This is Autophagy-related protein 18 from Kluyveromyces marxianus (strain DMKU3-1042 / BCC 29191 / NBRC 104275) (Yeast).